A 396-amino-acid polypeptide reads, in one-letter code: Gamma-D-glutamyl-L-diamino acid endopeptidase 1 (396 aa).

LysM domains are found at residues 1–45 (MDIL…RIQI) and 51–95 (TSYT…TIQV). One can recognise a Peptidase M14 domain in the interval 108-394 (QNYDYSMMMN…EALGIFLAGL (287 aa)). Zn(2+) is bound by residues H162 and E165. D255 lines the substrate pocket. H307 is a binding site for Zn(2+). Residue Y347 is the Proton donor of the active site. Catalysis depends on E366, which acts as the Proton donor/acceptor.

It belongs to the peptidase M14 family. The cofactor is Zn(2+).

It catalyses the reaction Hydrolysis of gamma-D-glutamyl bonds to the L-terminus (position 7) of meso-diaminopimelic acid (meso-A2pm) in 7-(L-Ala-gamma-D-Glu)-meso-A2pm and 7-(L-Ala-gamma-D-Glu)-7-(D-Ala)-meso-A2pm. It is required that the D-terminal amino and carboxy groups of meso-A2pm are unsubstituted.. In terms of biological role, an endopeptidase which hydrolyzes the gamma-D-Glu-(L)meso-diaminopimelic acid bond of L-Ala-gamma-D-Glu-(L)meso-diaminopimelic acid and L-Ala-gamma-D-Glu-(L)meso-diaminopimelic acid(L)-D-Ala peptides. It is active on spore cortex peptidoglycan. In Lysinibacillus sphaericus (Bacillus sphaericus), this protein is Gamma-D-glutamyl-L-diamino acid endopeptidase 1.